A 227-amino-acid polypeptide reads, in one-letter code: 2-C-methyl-D-erythritol 4-phosphate cytidylyltransferase (227 aa).

This sequence belongs to the IspD/TarI cytidylyltransferase family. IspD subfamily.

The enzyme catalyses 2-C-methyl-D-erythritol 4-phosphate + CTP + H(+) = 4-CDP-2-C-methyl-D-erythritol + diphosphate. It functions in the pathway isoprenoid biosynthesis; isopentenyl diphosphate biosynthesis via DXP pathway; isopentenyl diphosphate from 1-deoxy-D-xylulose 5-phosphate: step 2/6. Its function is as follows. Catalyzes the formation of 4-diphosphocytidyl-2-C-methyl-D-erythritol from CTP and 2-C-methyl-D-erythritol 4-phosphate (MEP). This chain is 2-C-methyl-D-erythritol 4-phosphate cytidylyltransferase, found in Bordetella parapertussis (strain 12822 / ATCC BAA-587 / NCTC 13253).